A 497-amino-acid polypeptide reads, in one-letter code: Squalene monooxygenase (497 aa).

FAD contacts are provided by residues 29–30 (VV), 49–50 (ER), Arg-57, Arg-159, Val-175, Asp-336, and Met-349. The next 2 helical transmembrane spans lie at 434 to 454 (FLSG…TVAL) and 467 to 487 (LGFL…AKVF).

The protein belongs to the squalene monooxygenase family. FAD serves as cofactor.

It is found in the microsome membrane. The protein localises to the endoplasmic reticulum membrane. It catalyses the reaction squalene + reduced [NADPH--hemoprotein reductase] + O2 = (S)-2,3-epoxysqualene + oxidized [NADPH--hemoprotein reductase] + H2O + H(+). Its pathway is terpene metabolism; lanosterol biosynthesis; lanosterol from farnesyl diphosphate: step 2/3. Catalyzes the stereospecific oxidation of squalene to (S)-2,3-epoxysqualene, and is considered to be a rate-limiting enzyme in steroid biosynthesis. The chain is Squalene monooxygenase (ERG1) from Eremothecium gossypii (strain ATCC 10895 / CBS 109.51 / FGSC 9923 / NRRL Y-1056) (Yeast).